Reading from the N-terminus, the 617-residue chain is Manganese lipoxygenase (617 aa).

The N-terminal stretch at 1-17 (MRIGLLAFAVAARYVEA) is a signal peptide. A compositionally biased stretch (low complexity) spans 23–48 (GEEVASSSAPTTLPSTSSSSALPSPT). The segment at 23 to 59 (GEEVASSSAPTTLPSTSSSSALPSPTKYTLPHEDPNP) is disordered. N-linked (GlcNAc...) asparagine glycans are attached at residues asparagine 109, asparagine 119, and asparagine 160. Residues 122–617 (LRDIQSHGGL…PAVNPFFLSI (496 aa)) enclose the Lipoxygenase domain. 4 residues coordinate Mn(2+): histidine 293, histidine 297, histidine 479, and asparagine 483. N-linked (GlcNAc...) asparagine glycosylation is present at asparagine 547. Isoleucine 617 contributes to the Mn(2+) binding site.

Belongs to the lipoxygenase family. Manganese lipoxygenase subfamily. It depends on Mn(2+) as a cofactor.

Its subcellular location is the secreted. It catalyses the reaction (9Z,12Z)-octadecadienoate + O2 = (9S)-hydroperoxy-(10E,12Z)-octadecadienoate. The enzyme catalyses (9Z,12Z)-octadecadienoate + O2 = (11S)-hydroperoxy-(9Z,12Z)-octadecadienoate. It carries out the reaction (9Z,12Z)-octadecadienoate + O2 = (13R)-hydroperoxy-(9Z,11E)-octadecadienoate. The catalysed reaction is (9Z,12Z,15Z)-octadecatrienoate + O2 = (9S)-hydroperoxy-(10E,12Z,15Z)-octadecatrienoate. It catalyses the reaction (9Z,12Z,15Z)-octadecatrienoate + O2 = (11R)-hydroperoxy-(9Z,12Z,15Z)-octadecatrienoate. The enzyme catalyses (9Z,12Z,15Z)-octadecatrienoate + O2 = (13R)-hydroperoxy-(9Z,11E,15Z)-octadecatrienoate. Its function is as follows. Lipoxygenase that metabolizes linoleic and alpha-linolenic acids to 9S-, 11- and 13R-hydroperoxy fatty acids. At the end of lipoxygenation, the intermediate products 11S-HPODE and 13R-HPODE from linoleic acid are then transformed into 9S-HPODE as the final product. The intermediate product 11R-HPOTrE from alpha-linolenic acid is transformed into 9S-HPOTrE and 13R-HPOTrE as the final products. 9S-HPOTrE is further oxidized by the enzyme to 9,16-DiHOTrE as the end product. Also acts on gamma-linolenic acid producing 9-HOTrE(n-6) as the main metabolite. The protein is Manganese lipoxygenase of Nakataea oryzae (Rice stem rot fungus).